The primary structure comprises 276 residues: Dermonecrotic toxin LarSicTox-alphaIB2c (276 aa).

The active site involves His-5. Residues Glu-25 and Asp-27 each contribute to the Mg(2+) site. His-41 acts as the Nucleophile in catalysis. Disulfide bonds link Cys-45-Cys-51 and Cys-47-Cys-190. Mg(2+) is bound at residue Asp-85. An N-linked (GlcNAc...) asparagine glycan is attached at Asn-253.

This sequence belongs to the arthropod phospholipase D family. Class II subfamily. Requires Mg(2+) as cofactor. In terms of tissue distribution, expressed by the venom gland.

Its subcellular location is the secreted. It carries out the reaction an N-(acyl)-sphingosylphosphocholine = an N-(acyl)-sphingosyl-1,3-cyclic phosphate + choline. The enzyme catalyses an N-(acyl)-sphingosylphosphoethanolamine = an N-(acyl)-sphingosyl-1,3-cyclic phosphate + ethanolamine. The catalysed reaction is a 1-acyl-sn-glycero-3-phosphocholine = a 1-acyl-sn-glycero-2,3-cyclic phosphate + choline. It catalyses the reaction a 1-acyl-sn-glycero-3-phosphoethanolamine = a 1-acyl-sn-glycero-2,3-cyclic phosphate + ethanolamine. In terms of biological role, dermonecrotic toxins cleave the phosphodiester linkage between the phosphate and headgroup of certain phospholipids (sphingolipid and lysolipid substrates), forming an alcohol (often choline) and a cyclic phosphate. This toxin acts on sphingomyelin (SM). It may also act on ceramide phosphoethanolamine (CPE), lysophosphatidylcholine (LPC) and lysophosphatidylethanolamine (LPE), but not on lysophosphatidylserine (LPS), and lysophosphatidylglycerol (LPG). It acts by transphosphatidylation, releasing exclusively cyclic phosphate products as second products. Induces dermonecrosis, hemolysis, increased vascular permeability, edema, inflammatory response, and platelet aggregation. The sequence is that of Dermonecrotic toxin LarSicTox-alphaIB2c from Loxosceles arizonica (Arizona brown spider).